A 378-amino-acid polypeptide reads, in one-letter code: Lipid-A-disaccharide synthase (378 aa).

The protein belongs to the LpxB family.

It carries out the reaction a lipid X + a UDP-2-N,3-O-bis[(3R)-3-hydroxyacyl]-alpha-D-glucosamine = a lipid A disaccharide + UDP + H(+). It functions in the pathway bacterial outer membrane biogenesis; LPS lipid A biosynthesis. Condensation of UDP-2,3-diacylglucosamine and 2,3-diacylglucosamine-1-phosphate to form lipid A disaccharide, a precursor of lipid A, a phosphorylated glycolipid that anchors the lipopolysaccharide to the outer membrane of the cell. This Pseudomonas aeruginosa (strain UCBPP-PA14) protein is Lipid-A-disaccharide synthase.